The following is a 219-amino-acid chain: Octanoyltransferase (219 aa).

Residues 34 to 209 (SESPDELWIV…TFSQLLGYQH (176 aa)) form the BPL/LPL catalytic domain. Residues 73-80 (RGGQVTYH), 140-142 (SLG), and 153-155 (GLA) each bind substrate. Catalysis depends on Cys-171, which acts as the Acyl-thioester intermediate.

The protein belongs to the LipB family.

Its subcellular location is the cytoplasm. It carries out the reaction octanoyl-[ACP] + L-lysyl-[protein] = N(6)-octanoyl-L-lysyl-[protein] + holo-[ACP] + H(+). Its pathway is protein modification; protein lipoylation via endogenous pathway; protein N(6)-(lipoyl)lysine from octanoyl-[acyl-carrier-protein]: step 1/2. Catalyzes the transfer of endogenously produced octanoic acid from octanoyl-acyl-carrier-protein onto the lipoyl domains of lipoate-dependent enzymes. Lipoyl-ACP can also act as a substrate although octanoyl-ACP is likely to be the physiological substrate. The chain is Octanoyltransferase from Shewanella putrefaciens (strain CN-32 / ATCC BAA-453).